Consider the following 1084-residue polypeptide: CRISPR-associated endonuclease Cas9 (1084 aa).

The active-site For RuvC-like nuclease domain is the Asp8. 3 residues coordinate Mn(2+): Asp8, Glu496, and Glu500. One can recognise an HNH Cas9-type domain in the interval 504–665 (TEKRAREMDG…MDEEIDARSM (162 aa)). His573 serves as the catalytic Proton acceptor for HNH nuclease domain. A Mn(2+)-binding site is contributed by His727.

This sequence belongs to the CRISPR-associated protein Cas9 family. Subtype II-C subfamily. In terms of assembly, monomer. Binds crRNA and tracrRNA. Mg(2+) serves as cofactor.

CRISPR (clustered regularly interspaced short palindromic repeat) is an adaptive immune system that provides protection against mobile genetic elements (viruses, transposable elements and conjugative plasmids). CRISPR clusters contain spacers, sequences complementary to antecedent mobile elements, and target invading nucleic acids. CRISPR clusters are transcribed and processed into CRISPR RNA (crRNA). In type II CRISPR systems correct processing of pre-crRNA requires a trans-encoded small RNA (tracrRNA), endogenous ribonuclease 3 (rnc) and this protein. The tracrRNA serves as a guide for ribonuclease 3-aided processing of pre-crRNA. Subsequently Cas9/crRNA/tracrRNA endonucleolytically cleaves linear or circular dsDNA target complementary to the spacer; Cas9 is inactive in the absence of the 2 guide RNAs (gRNA). Cas9 recognizes the protospacer adjacent motif (PAM) in the CRISPR repeat sequences to help distinguish self versus nonself, as targets within the bacterial CRISPR locus do not have PAMs. PAM recognition is also required for catalytic activity. The sequence is that of CRISPR-associated endonuclease Cas9 from Corynebacterium diphtheriae (strain ATCC 700971 / NCTC 13129 / Biotype gravis).